The following is a 322-amino-acid chain: NADH-quinone oxidoreductase subunit H (322 aa).

Transmembrane regions (helical) follow at residues 12–32 (VGKALIVLVGIVGAGAFMSFI), 79–99 (IFILAPIIAFTAFILAFAVVP), 111–131 (VGLLYILAIAGLAVYAVLFAG), 151–171 (LSYEVFLGLSLMGIVIQTGSF), 183–203 (LWNVVPQILGFITFLFAGVAV), 234–254 (FFVGEYIGIVLISSLIVTLFF), 262–282 (LPPFIWFALKTACFMVFFILL), and 301–321 (VCLPLTLVNMLITGAVVLINV).

It belongs to the complex I subunit 1 family. NDH-1 is composed of 14 different subunits. Subunits NuoA, H, J, K, L, M, N constitute the membrane sector of the complex.

It localises to the cell inner membrane. The enzyme catalyses a quinone + NADH + 5 H(+)(in) = a quinol + NAD(+) + 4 H(+)(out). NDH-1 shuttles electrons from NADH, via FMN and iron-sulfur (Fe-S) centers, to quinones in the respiratory chain. The immediate electron acceptor for the enzyme in this species is believed to be ubiquinone. Couples the redox reaction to proton translocation (for every two electrons transferred, four hydrogen ions are translocated across the cytoplasmic membrane), and thus conserves the redox energy in a proton gradient. This subunit may bind ubiquinone. This chain is NADH-quinone oxidoreductase subunit H, found in Aeromonas salmonicida (strain A449).